The following is a 342-amino-acid chain: Tetraacyldisaccharide 4'-kinase (342 aa).

Threonine 68–threonine 75 provides a ligand contact to ATP.

It belongs to the LpxK family.

It carries out the reaction a lipid A disaccharide + ATP = a lipid IVA + ADP + H(+). It participates in glycolipid biosynthesis; lipid IV(A) biosynthesis; lipid IV(A) from (3R)-3-hydroxytetradecanoyl-[acyl-carrier-protein] and UDP-N-acetyl-alpha-D-glucosamine: step 6/6. In terms of biological role, transfers the gamma-phosphate of ATP to the 4'-position of a tetraacyldisaccharide 1-phosphate intermediate (termed DS-1-P) to form tetraacyldisaccharide 1,4'-bis-phosphate (lipid IVA). This Burkholderia ambifaria (strain ATCC BAA-244 / DSM 16087 / CCUG 44356 / LMG 19182 / AMMD) (Burkholderia cepacia (strain AMMD)) protein is Tetraacyldisaccharide 4'-kinase.